A 902-amino-acid polypeptide reads, in one-letter code: Inter-alpha-trypsin inhibitor heavy chain H1 (902 aa).

An N-terminal signal peptide occupies residues M1–G28. In terms of domain architecture, VIT spans S29 to E158. C52 is a glycosylation site (S-linked (Hex...) cysteine). An N-linked (GlcNAc...) asparagine glycan is attached at N69. Position 121 is a phosphoserine (S121). An N-linked (GlcNAc...) asparagine glycan is attached at N277. The 161-residue stretch at N282–E442 folds into the VWFA domain. Phosphothreonine is present on residues T394 and T399. Residues S637–Q651 are compositionally biased toward polar residues. Residues S637–R656 form a disordered region. Residue S639 is glycosylated (O-linked (GalNAc...) serine). The O-linked (GalNAc...) threonine glycan is linked to T644. The residue at position 663 (D663) is an Aspartate 1-(chondroitin 4-sulfate)-ester. A propeptide spanning residues P664–F902 is cleaved from the precursor. Residue N741 is glycosylated (N-linked (GlcNAc...) asparagine).

Belongs to the ITIH family. As to quaternary structure, I-alpha-I plasma protease inhibitors are assembled from one or two heavy chains (HC) and one light chain, bikunin. Inter-alpha-inhibitor (I-alpha-I) is composed of ITIH1/HC1, ITIH2/HC2 and bikunin. Interacts with TNFAIP6 (via Link and CUB domains). Post-translationally, heavy chains are linked to bikunin via chondroitin 4-sulfate esterified to the alpha-carboxyl of the C-terminal aspartate after propeptide cleavage. The S-linked glycan is composed of two 6-carbon sugars, possibly Glc or Gal.

The protein resides in the secreted. In terms of biological role, may act as a carrier of hyaluronan in serum or as a binding protein between hyaluronan and other matrix protein, including those on cell surfaces in tissues to regulate the localization, synthesis and degradation of hyaluronan which are essential to cells undergoing biological processes. The polypeptide is Inter-alpha-trypsin inhibitor heavy chain H1 (ITIH1) (Sus scrofa (Pig)).